The sequence spans 25 residues: Acyl carrier protein (25 aa).

Residues Glu-2–Ala-25 enclose the Carrier domain.

This sequence belongs to the acyl carrier protein (ACP) family. 4'-phosphopantetheine is transferred from CoA to a specific serine of apo-ACP by AcpS. This modification is essential for activity because fatty acids are bound in thioester linkage to the sulfhydryl of the prosthetic group.

It is found in the cytoplasm. The protein operates within lipid metabolism; fatty acid biosynthesis. Functionally, carrier of the growing fatty acid chain in fatty acid biosynthesis. The polypeptide is Acyl carrier protein (acpP) (Alcaligenes faecalis).